We begin with the raw amino-acid sequence, 208 residues long: Large ribosomal subunit protein bL25 (208 aa).

Belongs to the bacterial ribosomal protein bL25 family. CTC subfamily. As to quaternary structure, part of the 50S ribosomal subunit; part of the 5S rRNA/L5/L18/L25 subcomplex. Contacts the 5S rRNA. Binds to the 5S rRNA independently of L5 and L18.

This is one of the proteins that binds to the 5S RNA in the ribosome where it forms part of the central protuberance. The protein is Large ribosomal subunit protein bL25 of Paracoccus denitrificans (strain Pd 1222).